A 201-amino-acid chain; its full sequence is Ubiquinone biosynthesis accessory factor UbiJ (201 aa).

In terms of domain architecture, SCP2 spans 15–112 (LNTFLYRSPA…QVVQNFVALA (98 aa)).

The protein belongs to the UbiJ family.

Its subcellular location is the cytoplasm. Its pathway is cofactor biosynthesis; ubiquinone biosynthesis. Its function is as follows. Required for ubiquinone (coenzyme Q) biosynthesis under aerobic conditions. Binds hydrophobic ubiquinone biosynthetic intermediates via its SCP2 domain and is essential for the stability of the Ubi complex. May constitute a docking platform where Ubi enzymes assemble and access their SCP2-bound polyprenyl substrates. Required for intracellular proliferation in macrophages. In Salmonella typhimurium (strain LT2 / SGSC1412 / ATCC 700720), this protein is Ubiquinone biosynthesis accessory factor UbiJ.